A 177-amino-acid chain; its full sequence is Calerythrin (177 aa).

EF-hand domains lie at 5–40, 45–90, 100–134, and 134–169; these read IASDRLKKRFDRWDFDGNGALERADFEKEAQHIAEA, AGAA…NLIF, VLGPVVKGTWGMCDKNADGQINADEFAAWLTALGM, and MSKAEAAEAFNQVDTNGNGELSLDELLTAVRDFHFG. Ca(2+)-binding residues include Asp-18, Asp-20, Asn-22, and Asp-29. Ca(2+) contacts are provided by Asp-113, Asn-115, Asp-117, Gln-119, Glu-124, Asp-147, Asn-149, Asn-151, Glu-153, and Glu-158.

The sequence is that of Calerythrin from Saccharopolyspora erythraea (Streptomyces erythraeus).